We begin with the raw amino-acid sequence, 1031 residues long: Beta-galactosidase (1031 aa).

The substrate site is built by N98 and D197. D197 contributes to the Na(+) binding site. Positions 412, 414, and 457 each coordinate Mg(2+). Substrate contacts are provided by residues E457 and 533 to 536 (EYAH). The active-site Proton donor is the E457. Catalysis depends on E533, which acts as the Nucleophile. N593 lines the Mg(2+) pocket. Na(+) contacts are provided by F597 and D600. Positions 600 and 1005 each coordinate substrate.

The protein belongs to the glycosyl hydrolase 2 family. In terms of assembly, homotetramer. Mg(2+) serves as cofactor. Na(+) is required as a cofactor.

It catalyses the reaction Hydrolysis of terminal non-reducing beta-D-galactose residues in beta-D-galactosides.. In Oenococcus oeni (strain ATCC BAA-331 / PSU-1), this protein is Beta-galactosidase.